Consider the following 21-residue polypeptide: Trypsin (21 aa).

It belongs to the peptidase S1 family.

The protein resides in the secreted. It is found in the extracellular space. The enzyme catalyses Preferential cleavage: Arg-|-Xaa, Lys-|-Xaa.. The sequence is that of Trypsin from Apis mellifera scutellata (Africanized honey bee).